The primary structure comprises 257 residues: NAD-capped RNA hydrolase NudC (257 aa).

Arg69 is a substrate binding site. Residues Cys98 and Cys101 each contribute to the Zn(2+) site. Glu111 lines the substrate pocket. Zn(2+) contacts are provided by Cys116 and Cys119. Residue Tyr124 participates in substrate binding. In terms of domain architecture, Nudix hydrolase spans 125-248 (PQIAPCIIVA…TVARRLIEDT (124 aa)). A divalent metal cation is bound by residues Ala158, Glu174, and Glu178. Residues 159 to 180 (GFVEVGETLEQAVAREVMEESG) carry the Nudix box motif. 192-199 (QPWPFPQS) lines the substrate pocket. Glu219 provides a ligand contact to a divalent metal cation. Ala241 lines the substrate pocket.

The protein belongs to the Nudix hydrolase family. NudC subfamily. Homodimer. Mg(2+) is required as a cofactor. Requires Mn(2+) as cofactor. Zn(2+) serves as cofactor.

The enzyme catalyses a 5'-end NAD(+)-phospho-ribonucleoside in mRNA + H2O = a 5'-end phospho-adenosine-phospho-ribonucleoside in mRNA + beta-nicotinamide D-ribonucleotide + 2 H(+). It carries out the reaction NAD(+) + H2O = beta-nicotinamide D-ribonucleotide + AMP + 2 H(+). The catalysed reaction is NADH + H2O = reduced beta-nicotinamide D-ribonucleotide + AMP + 2 H(+). Its function is as follows. mRNA decapping enzyme that specifically removes the nicotinamide adenine dinucleotide (NAD) cap from a subset of mRNAs by hydrolyzing the diphosphate linkage to produce nicotinamide mononucleotide (NMN) and 5' monophosphate mRNA. The NAD-cap is present at the 5'-end of some mRNAs and stabilizes RNA against 5'-processing. Has preference for mRNAs with a 5'-end purine. Catalyzes the hydrolysis of a broad range of dinucleotide pyrophosphates. This chain is NAD-capped RNA hydrolase NudC, found in Salmonella heidelberg (strain SL476).